Consider the following 633-residue polypeptide: MDYEEILFGLQPILNASSIKDVPMNDVYLGSYLAVMDQLAVSLREPSNRDIVGKTGLLLNLVRVLEQALDICFHDTSISINDKIAFYEISSEVIRCIANAIIDNDDNREILLDSGGKKLLNYYIGGVLQLDEISSDKSEDSLVDKLQMRSVVLLRNFCIGNLKYTENLAPFIRGPLFVLLKTTQYSYLSSPEKVVLGSDLLNDILKVNYSNVQISDLFFLSQYIKKISSNVQNKELQAMEDGAVEAYSNTETQKFAGQGNQEYIEKEEEDDEEDVNCELLLNLSTCLETIVAKDETINFTNEEQLVLSMQKNLILSLVCLESKTFNNKLIVMRRLISCAGNISANLTNSNKREQSLCIETIKSSASSYALAAALMILCNSVASKSDAVALLKLISLSELIQVGSLLQDPLQYQGFLDLLRKLLNLENTMWLDIKDLFTLFQIMRRCHEQTKYYNNLRSLLTNLLNKTLTVLPSSKIHNSISSDPTIISFIAEHGTLTSCIAMDKLLVSKKALPKEAITSLWDSIFKFQNLGQAEQLSISDLFHITKTVGIYLKDSSVTADVNPIENILFKDYIQKLTLILETILSFKENKDKGSESCFNNGKFIAGIILNIVKNTKCLTPEEQNLEALAKSFF.

As to quaternary structure, interacts with CDC42; the interaction is direct. Interacts with RHO1; the interaction is direct. Interacts with RHO2. Interacts with RHO4. Interacts with CDC11.

It is found in the nucleus. The protein localises to the cytoplasm. Probably acts as a GEF (guanine nucleotide exchange factor) for the Rho family of small GTP-binding proteins (G proteins) that stimulates the dissociation of GDP to enable subsequent binding of GTP. May also chaperone the processing and/or trafficking of small GTPases independently of GEF activity. Involved in the control of polarized cell growth via CDC42-mediated signaling. Involved in the control of cell-wall organization via RHO1-mediated signaling. May also function via RHO2 and RHO4. The protein is GTPase-GDP dissociation stimulator BEM4 of Saccharomyces cerevisiae (strain ATCC 204508 / S288c) (Baker's yeast).